The primary structure comprises 64 residues: Large ribosomal subunit protein bL32 (64 aa).

This sequence belongs to the bacterial ribosomal protein bL32 family.

The sequence is that of Large ribosomal subunit protein bL32 from Mycoplasma mobile (strain ATCC 43663 / 163K / NCTC 11711) (Mesomycoplasma mobile).